A 313-amino-acid chain; its full sequence is Porphobilinogen deaminase (313 aa).

The residue at position 241 (C241) is an S-(dipyrrolylmethanemethyl)cysteine.

Belongs to the HMBS family. In terms of assembly, monomer. It depends on dipyrromethane as a cofactor.

It carries out the reaction 4 porphobilinogen + H2O = hydroxymethylbilane + 4 NH4(+). It functions in the pathway porphyrin-containing compound metabolism; protoporphyrin-IX biosynthesis; coproporphyrinogen-III from 5-aminolevulinate: step 2/4. Its pathway is porphyrin-containing compound metabolism; chlorophyll biosynthesis. Its function is as follows. Tetrapolymerization of the monopyrrole PBG into the hydroxymethylbilane pre-uroporphyrinogen in several discrete steps. The protein is Porphobilinogen deaminase of Chlorobium limicola (strain DSM 245 / NBRC 103803 / 6330).